A 188-amino-acid chain; its full sequence is MKANDIKKGNVVEYNGGIYQIRDIERSSPQGRGGNVRFRFIMYSVPGGVKTDASFDADDNLPEVELLRRQSTFSYKDGEAFVFMDDEDFTPYTLDADVIGTDAGYITDGLTGIYVQVIDDQPVAVQLPQTVTLEVVETPPELKGGTATKRPKPAKLNTGMEIMVPEYITNGERVLVNTTTGEFAGRAD.

It belongs to the elongation factor P family.

The sequence is that of Elongation factor P-like protein from Xanthomonas euvesicatoria pv. vesicatoria (strain 85-10) (Xanthomonas campestris pv. vesicatoria).